The following is a 775-amino-acid chain: Dipeptidyl peptidase 4 (775 aa).

The N-terminal stretch at 1 to 15 (MKFLSLLLLVGVAQA) is a signal peptide. 3 N-linked (GlcNAc...) asparagine glycosylation sites follow: Asn-81, Asn-111, and Asn-219. Active-site charge relay system residues include Ser-613, Asp-690, and His-725. Residue Asn-731 is glycosylated (N-linked (GlcNAc...) asparagine).

It belongs to the peptidase S9B family.

It localises to the secreted. It catalyses the reaction Release of an N-terminal dipeptide, Xaa-Yaa-|-Zaa-, from a polypeptide, preferentially when Yaa is Pro, provided Zaa is neither Pro nor hydroxyproline.. Its function is as follows. Extracellular dipeptidyl-peptidase which removes N-terminal dipeptides sequentially from polypeptides having unsubstituted N-termini provided that the penultimate residue is proline. Contributes to pathogenicity. This Arthroderma otae (strain ATCC MYA-4605 / CBS 113480) (Microsporum canis) protein is Dipeptidyl peptidase 4 (DPP4).